The following is a 709-amino-acid chain: Translation initiation factor IF-2 (709 aa).

Composition is skewed to basic and acidic residues over residues Asp47–Lys70 and Lys105–Leu121. A disordered region spans residues Asp47–Pro157. Over residues Ala125 to Lys137 the composition is skewed to basic residues. The segment covering Gln138 to Pro149 has biased composition (low complexity). A tr-type G domain is found at Glu240 to Lys409. The segment at Gly249–Thr256 is G1. Gly249–Thr256 is a GTP binding site. Residues Gly274–His278 form a G2 region. The G3 stretch occupies residues Asp295–Gly298. GTP contacts are provided by residues Asp295–His299 and Asn349–Asp352. The interval Asn349–Asp352 is G4. Positions Ser385–Lys387 are G5.

This sequence belongs to the TRAFAC class translation factor GTPase superfamily. Classic translation factor GTPase family. IF-2 subfamily.

Its subcellular location is the cytoplasm. In terms of biological role, one of the essential components for the initiation of protein synthesis. Protects formylmethionyl-tRNA from spontaneous hydrolysis and promotes its binding to the 30S ribosomal subunits. Also involved in the hydrolysis of GTP during the formation of the 70S ribosomal complex. The protein is Translation initiation factor IF-2 of Geobacillus kaustophilus (strain HTA426).